Consider the following 366-residue polypeptide: NADP-dependent isopropanol dehydrogenase (366 aa).

4 residues coordinate Zn(2+): Cys43, His65, Glu66, and Asp156. NADP(+) is bound by residues 181–184 (IGPV), 204–206 (GSR), Tyr224, 271–273 (VNY), and Lys346.

The protein belongs to the zinc-containing alcohol dehydrogenase family. Homodimer. Requires Zn(2+) as cofactor.

It is found in the cytoplasm. It carries out the reaction propan-2-ol + NADP(+) = acetone + NADPH + H(+). Its function is as follows. Alcohol dehydrogenase with a preference for medium chain secondary alcohols, such as 2-butanol and isopropanol. Has very low activity with primary alcohols, such as ethanol. Under physiological conditions, the enzyme reduces aldehydes and 2-ketones to produce secondary alcohols. Is also active with acetaldehyde and propionaldehyde. This Entamoeba histolytica (strain ATCC 30459 / HM-1:IMSS / ABRM) protein is NADP-dependent isopropanol dehydrogenase.